A 348-amino-acid chain; its full sequence is Nicotinate-nucleotide--dimethylbenzimidazole phosphoribosyltransferase (348 aa).

Catalysis depends on Glu-316, which acts as the Proton acceptor.

This sequence belongs to the CobT family.

It catalyses the reaction 5,6-dimethylbenzimidazole + nicotinate beta-D-ribonucleotide = alpha-ribazole 5'-phosphate + nicotinate + H(+). It functions in the pathway nucleoside biosynthesis; alpha-ribazole biosynthesis; alpha-ribazole from 5,6-dimethylbenzimidazole: step 1/2. Its function is as follows. Catalyzes the synthesis of alpha-ribazole-5'-phosphate from nicotinate mononucleotide (NAMN) and 5,6-dimethylbenzimidazole (DMB). This chain is Nicotinate-nucleotide--dimethylbenzimidazole phosphoribosyltransferase, found in Xanthomonas campestris pv. campestris (strain B100).